The primary structure comprises 1311 residues: Zinc finger protein 521 (1311 aa).

The C2H2-type 1; degenerate zinc finger occupies 47–67; the sequence is HSCDSCLQVFESLSDITEHKI. The tract at residues 81-108 is disordered; it reads DPSCSWPASSPSSKDQTSPSHGEGCDFG. Low complexity predominate over residues 83–102; sequence SCSWPASSPSSKDQTSPSHG. 7 C2H2-type zinc fingers span residues 118–140, 146–168, 174–196, 202–224, 246–269, 281–304, and 310–332; these read YPCQ…EQSH, FKCT…IKLH, YHCS…LKTH, YKCA…MQVH, QKCS…AECH, LQCM…EQVH, and NSCS…MDSH. The tract at residues 357 to 398 is disordered; that stretch reads TTPDSNLSVDSSTMVEAAPPIPKSRGRKRAAQQTSDMTGPSS. 2 stretches are compositionally biased toward polar residues: residues 359–370 and 387–398; these read PDSNLSVDSSTM and AQQTSDMTGPSS. The C2H2-type 9; degenerate zinc finger occupies 405–429; the sequence is YSCIYCNKQLFSSLAVLQIHLKTMH. 3 consecutive C2H2-type zinc fingers follow at residues 437 to 460, 477 to 500, and 513 to 536; these read HICQ…KQVH, YQCN…RCSH, and FFCP…RQVH. Serine 546 is modified (phosphoserine). The C2H2-type 13; atypical zinc finger occupies 560-585; that stretch reads YSCSYCTNSPIFNSVLKLNKHIKENH. 2 positions are modified to phosphoserine: serine 605 and serine 608. C2H2-type zinc fingers lie at residues 634–656, 664–686, 694–717, 722–745, 752–775, 783–805, and 809–832; these read YICN…LKTH, LTCP…VTIH, YICE…LDMH, FRCT…AVKH, YRCT…KHNH, HKCI…ITTH, and YNCR…REKH. Positions 863–883 are disordered; that stretch reads TNSQESHNSHDGSEEDVDSSE. The C2H2-type 21; degenerate zinc-finger motif lies at 886–908; it reads YGCDICGAAYTMETLLQNHQLRD. C2H2-type zinc fingers lie at residues 930–952, 959–981, and 1020–1042; these read YKCN…MQTH, YMCP…KVTH, and FRCV…GTFH. The C2H2-type 25; degenerate zinc finger occupies 1065 to 1083; the sequence is YKCASCLKEFRSKQDLVKL. The segment covering 1105–1119 has biased composition (low complexity); it reads PGLSLPPGASRPGLG. Residues 1105 to 1136 are disordered; the sequence is PGLSLPPGASRPGLGQNESLSAMEGKGKAGGL. 5 consecutive C2H2-type zinc fingers follow at residues 1138–1161, 1195–1217, 1225–1247, 1256–1279, and 1286–1309; these read TRCS…QTVH, YQCI…VANH, HECK…LIEH, FKCP…FSAH, and YDCT…MTQH. Residue lysine 1146 forms a Glycyl lysine isopeptide (Lys-Gly) (interchain with G-Cter in SUMO2) linkage.

This sequence belongs to the krueppel C2H2-type zinc-finger protein family. In terms of assembly, interacts with EBF1. Interacts with SMAD1 and SMAD4. As to expression, widely expressed. Expressed in all B-cell stages.

The protein resides in the nucleus. Its function is as follows. Transcription factor that can both act as an activator or a repressor depending on the context. Involved in BMP signaling and in the regulation of the immature compartment of the hematopoietic system. Associates with SMADs in response to BMP2 leading to activate transcription of BMP target genes. Acts as a transcriptional repressor via its interaction with EBF1, a transcription factor involved specification of B-cell lineage; this interaction preventing EBF1 to bind DNA and activate target genes. The chain is Zinc finger protein 521 (Znf521) from Mus musculus (Mouse).